Reading from the N-terminus, the 141-residue chain is Protein NrdI (141 aa).

It belongs to the NrdI family.

Its function is as follows. Probably involved in ribonucleotide reductase function. The sequence is that of Protein NrdI from Wigglesworthia glossinidia brevipalpis.